The primary structure comprises 1031 residues: Semaphorin-6A (1031 aa).

An N-terminal signal peptide occupies residues 1–18; sequence MRPAALLLCLTLLHCAGA. At 19–649 the chain is on the extracellular side; that stretch reads GFPEDSEPIS…KSNDQLVPVT (631 aa). Residues 24 to 512 enclose the Sema domain; the sequence is SEPISISHGN…FSTCVIKVPL (489 aa). N-linked (GlcNAc...) asparagine glycosylation is found at N33, N49, and N65. 4 cysteine pairs are disulfide-bonded: C107-C117, C135-C144, C258-C369, and C283-C328. A glycan (N-linked (GlcNAc...) asparagine) is linked at N282. N434 and N461 each carry an N-linked (GlcNAc...) asparagine glycan. Intrachain disulfides connect C477-C506, C515-C533, C521-C568, and C525-C542. A helical membrane pass occupies residues 650-670; sequence LLAIAVILAFVMGAVFSGIIV. Residues 671–1031 lie on the Cytoplasmic side of the membrane; sequence YCVCDHRRKD…TSMKPNDACT (361 aa). At S698 the chain carries Phosphoserine. Disordered regions lie at residues 754-777, 861-902, and 914-1031; these read ALPTPESTPTLQQKRKPNRGSREW, SSKS…TGLS, and GLEY…DACT. Residues 921-931 are compositionally biased toward polar residues; sequence YPTNSLTRSHQ. A compositionally biased stretch (low complexity) spans 932-951; it reads TTTLKRNNTNSSNSSHLSRN. Residue S953 is modified to Phosphoserine. 2 stretches are compositionally biased toward polar residues: residues 971 to 998 and 1019 to 1031; these read QVHSSQPSGQAVTVSRQPSLNAYNSLTR and PLSTSMKPNDACT.

Belongs to the semaphorin family. Active as a homodimer or oligomer. The SEMA6A homodimer interacts with a PLXNA2 homodimer, giving rise to a heterotetramer. Interacts with EVL. Particularly high levels in spinal cord, cerebellum, metencephalon, superior and inferior colliculus, diencephalon, olfactory bulb and eye.

The protein resides in the cell membrane. Cell surface receptor for PLXNA2 that plays an important role in cell-cell signaling. Required for normal granule cell migration in the developing cerebellum. Promotes reorganization of the actin cytoskeleton and plays an important role in axon guidance in the developing central nervous system. Can act as repulsive axon guidance cue. Has repulsive action towards migrating granular neurons. May play a role in channeling sympathetic axons into the sympathetic chains and controlling the temporal sequence of sympathetic target innervation. This is Semaphorin-6A (Sema6a) from Mus musculus (Mouse).